The sequence spans 86 residues: Small ribosomal subunit protein bS20 (86 aa).

It belongs to the bacterial ribosomal protein bS20 family.

Functionally, binds directly to 16S ribosomal RNA. The protein is Small ribosomal subunit protein bS20 of Exiguobacterium sibiricum (strain DSM 17290 / CCUG 55495 / CIP 109462 / JCM 13490 / 255-15).